The primary structure comprises 666 residues: UvrABC system protein B (666 aa).

Residues 25-412 enclose the Helicase ATP-binding domain; sequence NGIKNNNKWQ…SENIAEQVIR (388 aa). An ATP-binding site is contributed by 38 to 45; the sequence is GVTGSGKT. A Beta-hairpin motif is present at residues 91–114; sequence YYDYYQPEAYVAQTDTYIEKDASI. Positions 429–595 constitute a Helicase C-terminal domain; sequence QIDDLYSEIK…TIKKAVRDVI (167 aa). Residues 622–657 enclose the UVR domain; the sequence is DKLIKEFEKEMKEAAKELQFEKAAYFRDKVNELKKK.

It belongs to the UvrB family. In terms of assembly, forms a heterotetramer with UvrA during the search for lesions. Interacts with UvrC in an incision complex.

The protein resides in the cytoplasm. The UvrABC repair system catalyzes the recognition and processing of DNA lesions. A damage recognition complex composed of 2 UvrA and 2 UvrB subunits scans DNA for abnormalities. Upon binding of the UvrA(2)B(2) complex to a putative damaged site, the DNA wraps around one UvrB monomer. DNA wrap is dependent on ATP binding by UvrB and probably causes local melting of the DNA helix, facilitating insertion of UvrB beta-hairpin between the DNA strands. Then UvrB probes one DNA strand for the presence of a lesion. If a lesion is found the UvrA subunits dissociate and the UvrB-DNA preincision complex is formed. This complex is subsequently bound by UvrC and the second UvrB is released. If no lesion is found, the DNA wraps around the other UvrB subunit that will check the other stand for damage. This chain is UvrABC system protein B, found in Clostridium acetobutylicum (strain ATCC 824 / DSM 792 / JCM 1419 / IAM 19013 / LMG 5710 / NBRC 13948 / NRRL B-527 / VKM B-1787 / 2291 / W).